Consider the following 633-residue polypeptide: Glutamyl-tRNA(Gln) amidotransferase subunit E (633 aa).

The protein belongs to the GatB/GatE family. GatE subfamily. In terms of assembly, heterodimer of GatD and GatE.

It catalyses the reaction L-glutamyl-tRNA(Gln) + L-glutamine + ATP + H2O = L-glutaminyl-tRNA(Gln) + L-glutamate + ADP + phosphate + H(+). In terms of biological role, allows the formation of correctly charged Gln-tRNA(Gln) through the transamidation of misacylated Glu-tRNA(Gln) in organisms which lack glutaminyl-tRNA synthetase. The reaction takes place in the presence of glutamine and ATP through an activated gamma-phospho-Glu-tRNA(Gln). The GatDE system is specific for glutamate and does not act on aspartate. The polypeptide is Glutamyl-tRNA(Gln) amidotransferase subunit E (Methanosarcina acetivorans (strain ATCC 35395 / DSM 2834 / JCM 12185 / C2A)).